Here is a 133-residue protein sequence, read N- to C-terminus: UPF0047 protein Rv2556c (133 aa).

Belongs to the UPF0047 family.

The protein is UPF0047 protein Rv2556c of Mycobacterium tuberculosis (strain ATCC 25618 / H37Rv).